The chain runs to 605 residues: Glucose oxidase (605 aa).

The N-terminal stretch at 1-16 (MQTLLVSSLVVSLAAA) is a signal peptide. FAD is bound by residues L51 and T52. N-linked (GlcNAc...) asparagine glycosylation is present at N65. E72 serves as a coordination point for FAD. N-linked (GlcNAc...) asparagine glycosylation occurs at N111. The FAD site is built by S125, N129, G130, and T132. N183 and N190 each carry an N-linked (GlcNAc...) asparagine glycan. C186 and C228 are joined by a disulfide. Residue V272 participates in FAD binding. Residues N280, N377, N410, and N495 are each glycosylated (N-linked (GlcNAc...) asparagine). The Proton acceptor role is filled by H538. Positions 559 and 560 each coordinate O2. 2 residues coordinate FAD: G571 and M583.

The protein belongs to the GMC oxidoreductase family. In terms of assembly, homodimer. FAD is required as a cofactor. The N-linked sugar chains of the glucose oxidase contributed to the high solubility of the enzyme in water.

It is found in the secreted. It localises to the cell wall. Its subcellular location is the cytoplasm. The protein resides in the extracellular space. The protein localises to the extracellular matrix. It catalyses the reaction beta-D-glucose + O2 = D-glucono-1,5-lactone + H2O2. Glucose oxidase catalyzes the oxidation of beta-D-glucose to D-glucono-delta-lactone and hydrogen peroxide in the presence of molecular oxygen. D-glucono-delta-lactone is sequentially hydrolyzed by lactonase to D-gluconic acid, and the resulting hydrogen peroxide is hydrolyzed by catalase to oxygen and water. The activity shows high specificity to beta-D-glucose, with very low to no activity towards L-glucose, 2-deoxy-D-glucose, 3-deoxy-D-glucose, 4-deoxy-D-glucose, 5-deoxy-D-glucose, 6-deoxy-D-glucose, 3-O-methyl-D-glucose, 4-O-methyl-D-glucose, 6-O-methyl-D-glucose, 4,6-O-benzylidene-D-glucose, 5-thio-5-deoxy-D-glucose, D-mannose, D-allose, D-galactose, D-fructose, D-arabinose, D-xylose, trehalose, melibiose, L-mannomethylose, lactose, sucrose or 1,5-anhydro-D-glucitol. This chain is Glucose oxidase, found in Aspergillus niger.